A 413-amino-acid chain; its full sequence is MNISRLFSFLFHGNLVKRISIGLLLGIIFALVSPSLESALGFHLAEKMGLLGQIFVRSLRSVAPILVFVLVIAAIANKKVGSKSNMKDIIYLYLIGTFLSALTAVFASFMFPTTIALATNEAELSPPGKITEVLTALIFNVVDNPITALFNANFIGILAWAIGLGITLRYASETTKNVMNDFAEAVSKIVHFIISFAPIGVFGLVASTLADKGLSALLDYVQLLAVLVGSMLFVAFVINPIIVFWKIRRNPYPLVWECIRVSGVTAFFTRSSAANIPVNMELAKRLNLDEETYSVSIPLGATINMGGAAITITVLTLAAVFTLGIEVSIPTAILLSLVASICACGASGVAGGSLLLIPLACSLFGISNDIAAQVIGVGFIIGVLQDSTETALNSSTDVLFTAAACMSEERKNS.

A run of 9 helical transmembrane segments spans residues 21–41 (IGLLLGIIFALVSPSLESALG), 61–81 (SVAPILVFVLVIAAIANKKVG), 89–109 (IIYLYLIGTFLSALTAVFASF), 146–166 (ITALFNANFIGILAWAIGLGI), 189–209 (IVHFIISFAPIGVFGLVASTL), 224–244 (LAVLVGSMLFVAFVINPIIVF), 305–325 (MGGAAITITVLTLAAVFTLGI), 337–357 (LVASICACGASGVAGGSLLLI), and 363–383 (LFGISNDIAAQVIGVGFIIGV).

This sequence belongs to the dicarboxylate/amino acid:cation symporter (DAACS) (TC 2.A.23) family.

The protein resides in the cell inner membrane. It catalyses the reaction L-serine(in) + Na(+)(in) = L-serine(out) + Na(+)(out). The enzyme catalyses L-threonine(in) + Na(+)(in) = L-threonine(out) + Na(+)(out). Its function is as follows. Involved in the import of serine and threonine into the cell, with the concomitant import of sodium (symport system). This Mannheimia succiniciproducens (strain KCTC 0769BP / MBEL55E) protein is Serine/threonine transporter SstT.